Reading from the N-terminus, the 146-residue chain is L-fucose mutarotase (146 aa).

Catalysis depends on His22, which acts as the Proton donor. Residues Asp30, Arg109, and 131 to 133 (YGN) contribute to the substrate site.

This sequence belongs to the RbsD / FucU family. FucU mutarotase subfamily. In terms of assembly, homodecamer.

It is found in the cytoplasm. It carries out the reaction alpha-L-fucose = beta-L-fucose. Its pathway is carbohydrate metabolism; L-fucose metabolism. Its function is as follows. Involved in the anomeric conversion of L-fucose. The sequence is that of L-fucose mutarotase from Glaesserella parasuis serovar 5 (strain SH0165) (Haemophilus parasuis).